Consider the following 192-residue polypeptide: Hydrophobin-like protein rodD (192 aa).

3 disulfide bridges follow: Cys45–Cys106, Cys50–Cys99, and Cys107–Cys112.

Belongs to the fungal hydrophobin family. In terms of assembly, self-assembles to form functional amyloid fibrils called rodlets. Self-assembly into fibrillar rodlets occurs spontaneously at hydrophobic:hydrophilic interfaces and the rodlets further associate laterally to form amphipathic monolayers.

Functionally, aerial growth, conidiation, and dispersal of filamentous fungi in the environment rely upon a capability of their secreting small amphipathic proteins called hydrophobins (HPBs) with low sequence identity. Class I can self-assemble into an outermost layer of rodlet bundles on aerial cell surfaces, conferring cellular hydrophobicity that supports fungal growth, development and dispersal; whereas Class II form highly ordered films at water-air interfaces through intermolecular interactions but contribute nothing to the rodlet structure. RodD is a an hydrophobin-like protein that, unlike rodA, is not required for rodlet formation. This chain is Hydrophobin-like protein rodD, found in Aspergillus fumigatus (strain ATCC MYA-4609 / CBS 101355 / FGSC A1100 / Af293) (Neosartorya fumigata).